The primary structure comprises 91 residues: DNA-directed RNA polymerase subunit omega (91 aa).

This sequence belongs to the RNA polymerase subunit omega family. As to quaternary structure, the RNAP catalytic core consists of 2 alpha, 1 beta, 1 beta' and 1 omega subunit. When a sigma factor is associated with the core the holoenzyme is formed, which can initiate transcription.

It catalyses the reaction RNA(n) + a ribonucleoside 5'-triphosphate = RNA(n+1) + diphosphate. In terms of biological role, promotes RNA polymerase assembly. Latches the N- and C-terminal regions of the beta' subunit thereby facilitating its interaction with the beta and alpha subunits. In Psychromonas ingrahamii (strain DSM 17664 / CCUG 51855 / 37), this protein is DNA-directed RNA polymerase subunit omega.